The following is a 392-amino-acid chain: Selenide, water dikinase 1 (392 aa).

S2 carries the post-translational modification N-acetylserine. Residue C31 is part of the active site. Residues K32, 67 to 69 (GMD), D87, D110, and 161 to 164 (GGQT) contribute to the ATP site. D69 contacts Mg(2+). Residue D110 coordinates Mg(2+). D265 contributes to the Mg(2+) binding site.

The protein belongs to the selenophosphate synthase 1 family. Class II subfamily. In terms of assembly, homodimer. The cofactor is Mg(2+).

The protein localises to the cell membrane. It localises to the nucleus membrane. It catalyses the reaction hydrogenselenide + ATP + H2O = selenophosphate + AMP + phosphate + 2 H(+). In terms of biological role, synthesizes selenophosphate from selenide and ATP. The sequence is that of Selenide, water dikinase 1 (Sephs1) from Mus musculus (Mouse).